Consider the following 370-residue polypeptide: Putative replication factor C small subunit L478 (370 aa).

Residue 41–48 (GPSGSGKK) participates in ATP binding. A compositionally biased stretch (basic and acidic residues) spans 342-353 (RNKEPEKSEKTK). The segment at 342 to 370 (RNKEPEKSEKTKSKTGKLSRTNSKKTIKN) is disordered. The segment covering 354 to 370 (SKTGKLSRTNSKKTIKN) has biased composition (basic residues).

The protein belongs to the activator 1 small subunits family. RfcS subfamily.

Functionally, part of the RFC clamp loader complex which loads the PCNA sliding clamp onto DNA. This Acanthamoeba polyphaga (Amoeba) protein is Putative replication factor C small subunit L478.